Here is a 485-residue protein sequence, read N- to C-terminus: Glycogen synthase (485 aa).

Lys-21 contributes to the ADP-alpha-D-glucose binding site.

It belongs to the glycosyltransferase 1 family. Bacterial/plant glycogen synthase subfamily.

It catalyses the reaction [(1-&gt;4)-alpha-D-glucosyl](n) + ADP-alpha-D-glucose = [(1-&gt;4)-alpha-D-glucosyl](n+1) + ADP + H(+). The protein operates within glycan biosynthesis; glycogen biosynthesis. Synthesizes alpha-1,4-glucan chains using ADP-glucose. The sequence is that of Glycogen synthase from Pseudomonas savastanoi pv. phaseolicola (strain 1448A / Race 6) (Pseudomonas syringae pv. phaseolicola (strain 1448A / Race 6)).